Consider the following 407-residue polypeptide: Probable cysteine protease atg4 (407 aa).

Cysteine 136 acts as the Nucleophile in catalysis. Catalysis depends on residues aspartate 310 and histidine 312.

It belongs to the peptidase C54 family.

It localises to the cytoplasm. The protein resides in the nucleus. The protein localises to the preautophagosomal structure. It catalyses the reaction [protein]-C-terminal L-amino acid-glycyl-phosphatidylethanolamide + H2O = [protein]-C-terminal L-amino acid-glycine + a 1,2-diacyl-sn-glycero-3-phosphoethanolamine. In terms of biological role, cysteine protease that is required for autophagy. Plays a key role in cytoplasm to vacuole transport (Cvt) and autophagy by mediating both proteolytic activation and delipidation of atg8. The protease activity is required for proteolytic activation of atg8 by the cleavage of the C-terminal amino acid of atg8 to reveal a C-terminal glycine. Azg8 ubiquitin-like activity requires the exposure of the glycine at the C-terminus for its conjugation to phosphatidylethanolamine (PE) and its insertion to membranes, which is necessary for autophagy. The atg8-PE conjugate mediates tethering between adjacent membranes and stimulates membrane hemifusion, leading to expansion of the autophagosomal membrane during autophagy. In addition to the protease activity, also catalyzes deconjugation of PE-conjugated forms of atg8 during macroautophagy since atg8 delipidation is required to release the protein from membranes, which facilitates multiple events during macroautophagy, and especially for efficient autophagosome biogenesis, the assembly of atg99-containing tubulovesicular clusters into phagophores/autophagosomes, and for the disassembly of PAS-associated ATG components. Atg8 delipidation by atg4 also recycles atg8-PE generated on inappropriate membranes to maintain a reservoir of unlipidated atg8 that is required for autophagosome formation at the PAS. The chain is Probable cysteine protease atg4 from Aspergillus oryzae (strain ATCC 42149 / RIB 40) (Yellow koji mold).